A 59-amino-acid chain; its full sequence is UPF0391 membrane protein AZC_4184 (59 aa).

A run of 2 helical transmembrane segments spans residues 4 to 24 (WALT…TAVA) and 30 to 50 (IAKI…VMGF).

The protein belongs to the UPF0391 family.

It localises to the cell membrane. The protein is UPF0391 membrane protein AZC_4184 of Azorhizobium caulinodans (strain ATCC 43989 / DSM 5975 / JCM 20966 / LMG 6465 / NBRC 14845 / NCIMB 13405 / ORS 571).